An 817-amino-acid chain; its full sequence is LisH domain-containing protein ARMC9 (817 aa).

Residues 15–47 (SESDLLSMISEYLKFGEFEETARTFEKEVKRKG) enclose the LisH domain. Disordered stretches follow at residues 580–605 (SATI…EEDV), 610–629 (LDKE…ESLL), and 642–817 (KTKR…SNRK). Residues 586–605 (QEPESDDEEDEDDDDDEEDV) are compositionally biased toward acidic residues. Polar residues-rich tracts occupy residues 692-715 (SSRP…TLAT) and 740-750 (GQTTNSVQSYS). The segment covering 805-817 (GRPSQQSSQSNRK) has biased composition (low complexity).

Expressed in multiple CNS regions, including the cerebellum, all periventricular regions, and all layers of the retina.

It is found in the cytoplasm. Its subcellular location is the cytoskeleton. The protein localises to the cilium basal body. It localises to the cell projection. The protein resides in the cilium. It is found in the microtubule organizing center. Its subcellular location is the centrosome. The protein localises to the centriole. Its function is as follows. Involved in ciliogenesis. It is required for appropriate acetylation and polyglutamylation of ciliary microtubules, and regulation of cilium length. Acts as a positive regulator of hedgehog (Hh) signaling. The protein is LisH domain-containing protein ARMC9 (armc9) of Danio rerio (Zebrafish).